Here is a 409-residue protein sequence, read N- to C-terminus: Argininosuccinate synthase (409 aa).

Residues 12–20 (AYSGGLDTS) and Ala-39 contribute to the ATP site. The L-citrulline site is built by Tyr-90 and Ser-95. Residue Gly-120 coordinates ATP. Residues Thr-122, Asn-126, and Asp-127 each coordinate L-aspartate. Asn-126 is a binding site for L-citrulline. L-citrulline contacts are provided by Arg-130, Ser-181, Ser-190, Glu-266, and Tyr-278.

Belongs to the argininosuccinate synthase family. Type 1 subfamily. In terms of assembly, homotetramer.

The protein localises to the cytoplasm. The enzyme catalyses L-citrulline + L-aspartate + ATP = 2-(N(omega)-L-arginino)succinate + AMP + diphosphate + H(+). Its pathway is amino-acid biosynthesis; L-arginine biosynthesis; L-arginine from L-ornithine and carbamoyl phosphate: step 2/3. The polypeptide is Argininosuccinate synthase (Gluconacetobacter diazotrophicus (strain ATCC 49037 / DSM 5601 / CCUG 37298 / CIP 103539 / LMG 7603 / PAl5)).